The chain runs to 365 residues: 3-isopropylmalate dehydrogenase (365 aa).

An NAD(+)-binding site is contributed by 76–89 (GPKWDQNPSELRPE). Substrate contacts are provided by arginine 96, arginine 106, arginine 134, and aspartate 224. Mg(2+) contacts are provided by aspartate 224, aspartate 248, and aspartate 252. 282-294 (GSAPDIAGKGMAN) lines the NAD(+) pocket.

It belongs to the isocitrate and isopropylmalate dehydrogenases family. LeuB type 1 subfamily. In terms of assembly, homodimer. Mg(2+) is required as a cofactor. The cofactor is Mn(2+).

The protein localises to the cytoplasm. It catalyses the reaction (2R,3S)-3-isopropylmalate + NAD(+) = 4-methyl-2-oxopentanoate + CO2 + NADH. Its pathway is amino-acid biosynthesis; L-leucine biosynthesis; L-leucine from 3-methyl-2-oxobutanoate: step 3/4. In terms of biological role, catalyzes the oxidation of 3-carboxy-2-hydroxy-4-methylpentanoate (3-isopropylmalate) to 3-carboxy-4-methyl-2-oxopentanoate. The product decarboxylates to 4-methyl-2 oxopentanoate. The sequence is that of 3-isopropylmalate dehydrogenase (leuB) from Bacillus subtilis (strain 168).